The sequence spans 188 residues: Putative lipoprotein LprB (188 aa).

The signal sequence occupies residues 1–27 (MRCDVRALALAARGLIELMIVIPMVAG). Cys-28 carries N-palmitoyl cysteine lipidation. A lipid anchor (S-diacylglycerol cysteine) is attached at Cys-28.

Its subcellular location is the cell membrane. The polypeptide is Putative lipoprotein LprB (lprB) (Mycobacterium leprae (strain TN)).